The following is a 254-amino-acid chain: Glutathione S-transferase F14 (254 aa).

One can recognise a GST N-terminal domain in the interval 4–85 (SKMKLHCGFI…YLAEQYKDVG (82 aa)). Glutathione-binding positions include 42-43 (AK), 56-57 (EV), and 69-70 (EP). In terms of domain architecture, GST C-terminal spans 92–231 (DPKKRAIMSM…DLMKQRRLPI (140 aa)).

The protein belongs to the GST superfamily. Phi family.

It is found in the cytoplasm. The protein localises to the cytosol. It carries out the reaction RX + glutathione = an S-substituted glutathione + a halide anion + H(+). In terms of biological role, may be involved in the conjugation of reduced glutathione to a wide number of exogenous and endogenous hydrophobic electrophiles and have a detoxification role against certain herbicides. This chain is Glutathione S-transferase F14, found in Arabidopsis thaliana (Mouse-ear cress).